We begin with the raw amino-acid sequence, 38 residues long: Phospholipase A2 2 (38 aa).

Ca(2+) is bound by residues Y28, G30, and G32.

The protein belongs to the phospholipase A2 family. Group I subfamily. Requires Ca(2+) as cofactor. As to expression, expressed by the venom gland.

The protein localises to the secreted. The enzyme catalyses a 1,2-diacyl-sn-glycero-3-phosphocholine + H2O = a 1-acyl-sn-glycero-3-phosphocholine + a fatty acid + H(+). Snake venom phospholipase A2 (PLA2) that inhibits neuromuscular transmission by blocking acetylcholine release from the nerve termini. PLA2 catalyzes the calcium-dependent hydrolysis of the 2-acyl groups in 3-sn-phosphoglycerides. The protein is Phospholipase A2 2 of Calliophis bivirgatus (Blue Malaysian coral snake).